A 471-amino-acid polypeptide reads, in one-letter code: ATP synthase subunit beta (471 aa).

ATP is bound at residue 156-163 (GGAGVGKT).

The protein belongs to the ATPase alpha/beta chains family. In terms of assembly, F-type ATPases have 2 components, CF(1) - the catalytic core - and CF(0) - the membrane proton channel. CF(1) has five subunits: alpha(3), beta(3), gamma(1), delta(1), epsilon(1). CF(0) has three main subunits: a(1), b(2) and c(9-12). The alpha and beta chains form an alternating ring which encloses part of the gamma chain. CF(1) is attached to CF(0) by a central stalk formed by the gamma and epsilon chains, while a peripheral stalk is formed by the delta and b chains.

It localises to the cell membrane. The catalysed reaction is ATP + H2O + 4 H(+)(in) = ADP + phosphate + 5 H(+)(out). Produces ATP from ADP in the presence of a proton gradient across the membrane. The catalytic sites are hosted primarily by the beta subunits. The polypeptide is ATP synthase subunit beta (Lysinibacillus sphaericus (strain C3-41)).